Here is a 492-residue protein sequence, read N- to C-terminus: MQIRGTDYTALTWQGDALALGFFENATEITGDLTQLDDRLEGVLRELIEEKEFKGKAGQKLVSRVGSKTPIKKLILVGLGEIEKFNSQVLGDGAAAIARLAKGEKVKTLGVSLPQREHDPAQTAAILTEGILLALHQDNRFKSDPEDKEIKLTTVELLGLGEQSTAIGKAEKIVSGVILAREMVAAPANEVTPLTFTEIATELAQTYGLELEVLGQTECEALGMGAFLGVAKASELPPQFIHLTYRPANPVKKLAIIGKSLTFDSGGLNIKGAGSGIETMKMDMGGGGATLGAAKAIAQLKPNVEIHFICAATENMISGTAMHPGDILTASNGKTIEVNNTDAEGRLTLADALVFAEKLGVEAIVDLATLTGACIVALGDDIGGLWSPNQELADELKVAADKAGEKFWQMPMESKYFEGLKSPIADMKNTGPRSGGSITAALFLQQFIKETPWAHLDIAGPVWTDKQNGVHNAGATGYPVRTLVQWVLGLAE.

Residues Lys259 and Asp264 each coordinate Mn(2+). The active site involves Lys271. Mn(2+)-binding residues include Asp283, Asp342, and Glu344. Arg346 is a catalytic residue.

The protein belongs to the peptidase M17 family. The cofactor is Mn(2+).

Its subcellular location is the cytoplasm. It catalyses the reaction Release of an N-terminal amino acid, Xaa-|-Yaa-, in which Xaa is preferably Leu, but may be other amino acids including Pro although not Arg or Lys, and Yaa may be Pro. Amino acid amides and methyl esters are also readily hydrolyzed, but rates on arylamides are exceedingly low.. It carries out the reaction Release of an N-terminal amino acid, preferentially leucine, but not glutamic or aspartic acids.. Its function is as follows. Presumably involved in the processing and regular turnover of intracellular proteins. Catalyzes the removal of unsubstituted N-terminal amino acids from various peptides. In Synechocystis sp. (strain ATCC 27184 / PCC 6803 / Kazusa), this protein is Probable cytosol aminopeptidase (pepA).